The sequence spans 513 residues: Arabinoxylan arabinofuranohydrolase (513 aa).

A signal peptide spans 1-26; it reads MRKKCSVCLWILVLLLSCLSGKSAYA. D50 (proton acceptor) is an active-site residue. Catalysis depends on E251, which acts as the Proton donor. N314 contacts substrate. The CBM6 domain occupies 382 to 511; that stretch reads NRVEAETFAW…LFNFDYWQFT (130 aa). The Ca(2+) site is built by E385, E387, N409, Q410, and D506.

The protein localises to the secreted. The enzyme catalyses Hydrolysis of terminal non-reducing alpha-L-arabinofuranoside residues in alpha-L-arabinosides.. It functions in the pathway glycan degradation; xylan degradation. In terms of biological role, cleaves arabinose units from O-2- or O-3-monosubstituted xylose residues, thereby assisting in arabinoxylan (AX) and short-chain arabinoxylo-oligosaccharide (AXOS) degradation. Is more active on wheat bran AXOS than on wheat water-extractable AX and rye water-extractable AX. Does not display endoxylanase, xylosidase or arabinanase activity. The protein is Arabinoxylan arabinofuranohydrolase (xynD) of Bacillus subtilis (strain 168).